The chain runs to 650 residues: 1-deoxy-D-xylulose-5-phosphate synthase (650 aa).

Thiamine diphosphate contacts are provided by residues His-73 and 113 to 115; that span reads SHA. Residue Asp-145 participates in Mg(2+) binding. Residues 146-147, Asn-175, Tyr-287, and Glu-369 each bind thiamine diphosphate; that span reads GA. A Mg(2+)-binding site is contributed by Asn-175. The interval 629-650 is disordered; sequence SARPLPEDAERVPMRAEDDEQA. The segment covering 633–644 has biased composition (basic and acidic residues); the sequence is LPEDAERVPMRA.

This sequence belongs to the transketolase family. DXPS subfamily. In terms of assembly, homodimer. Mg(2+) is required as a cofactor. Requires thiamine diphosphate as cofactor.

It catalyses the reaction D-glyceraldehyde 3-phosphate + pyruvate + H(+) = 1-deoxy-D-xylulose 5-phosphate + CO2. It functions in the pathway metabolic intermediate biosynthesis; 1-deoxy-D-xylulose 5-phosphate biosynthesis; 1-deoxy-D-xylulose 5-phosphate from D-glyceraldehyde 3-phosphate and pyruvate: step 1/1. Functionally, catalyzes the acyloin condensation reaction between C atoms 2 and 3 of pyruvate and glyceraldehyde 3-phosphate to yield 1-deoxy-D-xylulose-5-phosphate (DXP). This Clavibacter sepedonicus (Clavibacter michiganensis subsp. sepedonicus) protein is 1-deoxy-D-xylulose-5-phosphate synthase.